We begin with the raw amino-acid sequence, 425 residues long: Enolase (425 aa).

A (2R)-2-phosphoglycerate-binding site is contributed by Gln163. The active-site Proton donor is Glu205. Mg(2+) is bound by residues Asp242, Glu285, and Asp312. The (2R)-2-phosphoglycerate site is built by Lys337, Arg366, Ser367, and Lys388. The active-site Proton acceptor is the Lys337.

It belongs to the enolase family. The cofactor is Mg(2+).

The protein localises to the cytoplasm. It localises to the secreted. Its subcellular location is the cell surface. The enzyme catalyses (2R)-2-phosphoglycerate = phosphoenolpyruvate + H2O. It participates in carbohydrate degradation; glycolysis; pyruvate from D-glyceraldehyde 3-phosphate: step 4/5. Its function is as follows. Catalyzes the reversible conversion of 2-phosphoglycerate (2-PG) into phosphoenolpyruvate (PEP). It is essential for the degradation of carbohydrates via glycolysis. This is Enolase from Syntrophomonas wolfei subsp. wolfei (strain DSM 2245B / Goettingen).